Reading from the N-terminus, the 386-residue chain is Succinate--CoA ligase [ADP-forming] subunit beta (386 aa).

The 236-residue stretch at 9-244 (KEVLRKYGVV…LDEEDADEIE (236 aa)) folds into the ATP-grasp domain. ATP is bound by residues Lys-46, 53–55 (GRG), Glu-99, Ala-102, and Glu-107. Mg(2+) is bound by residues Asn-199 and Asp-213. Substrate-binding positions include Asn-264 and 321 to 323 (GIM).

It belongs to the succinate/malate CoA ligase beta subunit family. Heterotetramer of two alpha and two beta subunits. It depends on Mg(2+) as a cofactor.

The enzyme catalyses succinate + ATP + CoA = succinyl-CoA + ADP + phosphate. It catalyses the reaction GTP + succinate + CoA = succinyl-CoA + GDP + phosphate. It functions in the pathway carbohydrate metabolism; tricarboxylic acid cycle; succinate from succinyl-CoA (ligase route): step 1/1. Succinyl-CoA synthetase functions in the citric acid cycle (TCA), coupling the hydrolysis of succinyl-CoA to the synthesis of either ATP or GTP and thus represents the only step of substrate-level phosphorylation in the TCA. The beta subunit provides nucleotide specificity of the enzyme and binds the substrate succinate, while the binding sites for coenzyme A and phosphate are found in the alpha subunit. The chain is Succinate--CoA ligase [ADP-forming] subunit beta from Azoarcus sp. (strain BH72).